Reading from the N-terminus, the 412-residue chain is N-carbamoyl-L-amino-acid amidohydrolase (412 aa).

Residues His-82, Asp-93, Glu-128, and His-193 each coordinate a divalent metal cation. An N-carbamoyl-L-alpha-amino acid is bound by residues Gln-196, His-229, Asn-278, Arg-291, and Gly-360. The involved in dimerization stretch occupies residues 212–330; sequence SIVGVRALRV…DVDEFFNLSP (119 aa). His-385 contributes to the a divalent metal cation binding site.

Belongs to the peptidase M20 family. In terms of assembly, homodimer. Mn(2+) is required as a cofactor. The cofactor is Ni(2+). Co(2+) serves as cofactor. Requires Fe(2+) as cofactor.

It catalyses the reaction an N-carbamoyl-L-alpha-amino acid + H2O + 2 H(+) = an L-alpha-amino acid + NH4(+) + CO2. The catalysed reaction is N-carbamoyl-L-tryptophan + H2O + 2 H(+) = L-tryptophan + NH4(+) + CO2. The enzyme catalyses N-carbamoyl-L-tyrosine + H2O + 2 H(+) = L-tyrosine + NH4(+) + CO2. It carries out the reaction N-carbamoyl-L-phenylalanine + H2O + 2 H(+) = L-phenylalanine + NH4(+) + CO2. Functionally, catalyzes the hydrolysis of aliphatic N-carbamoyl-L-alpha-amino acids to free L-alpha-amino acids. Is strictly L-specific since it is inactive toward N-carbamoyl-D-alpha-amino acids. Shows a preference for aromatic N-carbamoyl-L-alpha-amino acids, such as N-carbamoyl-L-tryptophan and N-carbamoyl-L-tyrosine and, to a lesser extent, N-carbamoyl-L-phenylalanine and the non-natural amino acid N-carbamoyl-L-thienylalanine. Carbamoyl derivatives of beta-alanine and charged aliphatic amino acids are not accepted as substrates. The chain is N-carbamoyl-L-amino-acid amidohydrolase from Paenarthrobacter aurescens (Arthrobacter aurescens).